Here is a 1361-residue protein sequence, read N- to C-terminus: DNA-directed RNA polymerase subunit beta'' (1361 aa).

Residues Cys-224, Cys-295, Cys-302, and Cys-305 each coordinate Zn(2+).

Belongs to the RNA polymerase beta' chain family. RpoC2 subfamily. In terms of assembly, in plastids the minimal PEP RNA polymerase catalytic core is composed of four subunits: alpha, beta, beta', and beta''. When a (nuclear-encoded) sigma factor is associated with the core the holoenzyme is formed, which can initiate transcription. Zn(2+) is required as a cofactor.

It localises to the plastid. The protein resides in the chloroplast. The catalysed reaction is RNA(n) + a ribonucleoside 5'-triphosphate = RNA(n+1) + diphosphate. Functionally, DNA-dependent RNA polymerase catalyzes the transcription of DNA into RNA using the four ribonucleoside triphosphates as substrates. The protein is DNA-directed RNA polymerase subunit beta'' of Spinacia oleracea (Spinach).